Reading from the N-terminus, the 340-residue chain is SH2 domain-containing adapter protein D (340 aa).

Disordered stretches follow at residues 1 to 77, 94 to 186, and 198 to 230; these read MAKW…PKHR, GGPG…QPWE, and VQFDSPEWERTPGSAKELRRPPPRSPQPAERVD. Positions 98–108 are enriched in acidic residues; the sequence is EELEADTEYLD. Basic and acidic residues predominate over residues 171–186; it reads PQEDERPADEYDQPWE. The SH2 domain maps to 240–335; the sequence is WFHGPLNRAD…AEHLALLYPV (96 aa).

In terms of processing, tyrosine phosphorylated by ABL.

Its function is as follows. May function as an adapter protein. The protein is SH2 domain-containing adapter protein D (SHD) of Homo sapiens (Human).